A 226-amino-acid chain; its full sequence is ATP synthase F(0) complex subunit a (226 aa).

The next 6 helical transmembrane spans lie at 14–34, 68–88, 97–117, 138–158, 164–184, and 193–213; these read ILGI…FSAP, WTLM…LGLL, QLSM…LMGF, IPML…ALAV, ITAG…LSSI, and FTIL…QAYV.

The protein belongs to the ATPase A chain family. In terms of assembly, component of the ATP synthase complex composed at least of ATP5F1A/subunit alpha, ATP5F1B/subunit beta, ATP5MC1/subunit c (homooctomer), MT-ATP6/subunit a, MT-ATP8/subunit 8, ATP5ME/subunit e, ATP5MF/subunit f, ATP5MG/subunit g, ATP5MK/subunit k, ATP5MJ/subunit j, ATP5F1C/subunit gamma, ATP5F1D/subunit delta, ATP5F1E/subunit epsilon, ATP5PF/subunit F6, ATP5PB/subunit b, ATP5PD/subunit d, ATP5PO/subunit OSCP. ATP synthase complex consists of a soluble F(1) head domain (subunits alpha(3) and beta(3)) - the catalytic core - and a membrane F(0) domain - the membrane proton channel (subunits c, a, 8, e, f, g, k and j). These two domains are linked by a central stalk (subunits gamma, delta, and epsilon) rotating inside the F1 region and a stationary peripheral stalk (subunits F6, b, d, and OSCP). Interacts with DNAJC30; interaction is direct.

It localises to the mitochondrion inner membrane. It carries out the reaction H(+)(in) = H(+)(out). In terms of biological role, subunit a, of the mitochondrial membrane ATP synthase complex (F(1)F(0) ATP synthase or Complex V) that produces ATP from ADP in the presence of a proton gradient across the membrane which is generated by electron transport complexes of the respiratory chain. ATP synthase complex consist of a soluble F(1) head domain - the catalytic core - and a membrane F(1) domain - the membrane proton channel. These two domains are linked by a central stalk rotating inside the F(1) region and a stationary peripheral stalk. During catalysis, ATP synthesis in the catalytic domain of F(1) is coupled via a rotary mechanism of the central stalk subunits to proton translocation. With the subunit c (ATP5MC1), forms the proton-conducting channel in the F(0) domain, that contains two crucial half-channels (inlet and outlet) that facilitate proton movement from the mitochondrial intermembrane space (IMS) into the matrix. Protons are taken up via the inlet half-channel and released through the outlet half-channel, following a Grotthuss mechanism. The protein is ATP synthase F(0) complex subunit a of Tachyglossus aculeatus aculeatus (Southeast Australian short-beaked echidna).